Here is a 453-residue protein sequence, read N- to C-terminus: Tubulin alpha-1/2/3 chain (453 aa).

Residue Gln11 participates in GTP binding. N6-acetyllysine is present on Lys40. GTP contacts are provided by Glu71, Ser140, Gly144, Thr145, Thr179, Asn206, and Asn228. Residue Glu71 participates in Mg(2+) binding. Glu254 is an active-site residue. The tract at residues 429 to 453 (EKDYEEVGTESQEGDGEEGEDGGDQ) is disordered. Over residues 431 to 453 (DYEEVGTESQEGDGEEGEDGGDQ) the composition is skewed to acidic residues.

Belongs to the tubulin family. As to quaternary structure, dimer of alpha and beta chains. A typical microtubule is a hollow water-filled tube with an outer diameter of 25 nm and an inner diameter of 15 nM. Alpha-beta heterodimers associate head-to-tail to form protofilaments running lengthwise along the microtubule wall with the beta-tubulin subunit facing the microtubule plus end conferring a structural polarity. Microtubules usually have 13 protofilaments but different protofilament numbers can be found in some organisms and specialized cells. It depends on Mg(2+) as a cofactor. Acetylation of alpha chains at Lys-40 stabilizes microtubules and affects affinity and processivity of microtubule motors. This modification has a role in multiple cellular functions, ranging from cell motility, cell cycle progression or cell differentiation to intracellular trafficking and signaling.

It is found in the cytoplasm. The protein resides in the cytoskeleton. It carries out the reaction GTP + H2O = GDP + phosphate + H(+). Functionally, tubulin is the major constituent of microtubules, a cylinder consisting of laterally associated linear protofilaments composed of alpha- and beta-tubulin heterodimers. Microtubules grow by the addition of GTP-tubulin dimers to the microtubule end, where a stabilizing cap forms. Below the cap, tubulin dimers are in GDP-bound state, owing to GTPase activity of alpha-tubulin. The chain is Tubulin alpha-1/2/3 chain (TBA1) from Naegleria gruberi (Amoeba).